A 304-amino-acid chain; its full sequence is Phosphatidylserine decarboxylase proenzyme (304 aa).

Residues aspartate 90, histidine 147, and serine 253 each act as charge relay system; for autoendoproteolytic cleavage activity in the active site. The Schiff-base intermediate with substrate; via pyruvic acid; for decarboxylase activity role is filled by serine 253. Serine 253 is modified (pyruvic acid (Ser); by autocatalysis).

It belongs to the phosphatidylserine decarboxylase family. PSD-B subfamily. Prokaryotic type I sub-subfamily. As to quaternary structure, heterodimer of a large membrane-associated beta subunit and a small pyruvoyl-containing alpha subunit. It depends on pyruvate as a cofactor. Post-translationally, is synthesized initially as an inactive proenzyme. Formation of the active enzyme involves a self-maturation process in which the active site pyruvoyl group is generated from an internal serine residue via an autocatalytic post-translational modification. Two non-identical subunits are generated from the proenzyme in this reaction, and the pyruvate is formed at the N-terminus of the alpha chain, which is derived from the carboxyl end of the proenzyme. The autoendoproteolytic cleavage occurs by a canonical serine protease mechanism, in which the side chain hydroxyl group of the serine supplies its oxygen atom to form the C-terminus of the beta chain, while the remainder of the serine residue undergoes an oxidative deamination to produce ammonia and the pyruvoyl prosthetic group on the alpha chain. During this reaction, the Ser that is part of the protease active site of the proenzyme becomes the pyruvoyl prosthetic group, which constitutes an essential element of the active site of the mature decarboxylase.

Its subcellular location is the cell membrane. It catalyses the reaction a 1,2-diacyl-sn-glycero-3-phospho-L-serine + H(+) = a 1,2-diacyl-sn-glycero-3-phosphoethanolamine + CO2. It functions in the pathway phospholipid metabolism; phosphatidylethanolamine biosynthesis; phosphatidylethanolamine from CDP-diacylglycerol: step 2/2. Catalyzes the formation of phosphatidylethanolamine (PtdEtn) from phosphatidylserine (PtdSer). The sequence is that of Phosphatidylserine decarboxylase proenzyme from Dickeya dadantii (strain 3937) (Erwinia chrysanthemi (strain 3937)).